Reading from the N-terminus, the 468-residue chain is 3-isopropylmalate dehydratase large subunit (468 aa).

Residues C349, C409, and C412 each contribute to the [4Fe-4S] cluster site.

Belongs to the aconitase/IPM isomerase family. LeuC type 1 subfamily. In terms of assembly, heterodimer of LeuC and LeuD. It depends on [4Fe-4S] cluster as a cofactor.

It carries out the reaction (2R,3S)-3-isopropylmalate = (2S)-2-isopropylmalate. It functions in the pathway amino-acid biosynthesis; L-leucine biosynthesis; L-leucine from 3-methyl-2-oxobutanoate: step 2/4. Its function is as follows. Catalyzes the isomerization between 2-isopropylmalate and 3-isopropylmalate, via the formation of 2-isopropylmaleate. This chain is 3-isopropylmalate dehydratase large subunit, found in Jannaschia sp. (strain CCS1).